Consider the following 457-residue polypeptide: 3-ketoacyl-CoA thiolase 5, peroxisomal (457 aa).

Residues Met-1–Cys-37 constitute a peroxisome transit peptide. Catalysis depends on Cys-137, which acts as the Acyl-thioester intermediate. Residues His-394 and Cys-426 each act as proton acceptor in the active site.

Belongs to the thiolase-like superfamily. Thiolase family. In terms of assembly, homodimer. As to expression, expressed in seedlings and wounded leaves.

The protein localises to the peroxisome. The enzyme catalyses an acyl-CoA + acetyl-CoA = a 3-oxoacyl-CoA + CoA. It participates in lipid metabolism; fatty acid metabolism. Its function is as follows. Probably involved in long chain fatty-acid beta-oxidation prior to gluconeogenesis during germination and subsequent seedling growth. Involved in systemic jasmonic acid (JA) biosynthesis after wounding and may be during senescence. This is 3-ketoacyl-CoA thiolase 5, peroxisomal (KAT5) from Arabidopsis thaliana (Mouse-ear cress).